The sequence spans 444 residues: Trigger factor (444 aa).

Positions 166–251 constitute a PPIase FKBP-type domain; that stretch reads GDQVVIDFKG…VKAVKAPKAA (86 aa).

This sequence belongs to the FKBP-type PPIase family. Tig subfamily.

It is found in the cytoplasm. The enzyme catalyses [protein]-peptidylproline (omega=180) = [protein]-peptidylproline (omega=0). In terms of biological role, involved in protein export. Acts as a chaperone by maintaining the newly synthesized protein in an open conformation. Functions as a peptidyl-prolyl cis-trans isomerase. The sequence is that of Trigger factor from Cereibacter sphaeroides (strain ATCC 17029 / ATH 2.4.9) (Rhodobacter sphaeroides).